Reading from the N-terminus, the 110-residue chain is Insulin (110 aa).

Positions 1–24 (MALWMRLLPLLALLALWAPAPTRA) are cleaved as a signal peptide. Intrachain disulfides connect Cys31/Cys96, Cys43/Cys109, and Cys95/Cys100. Positions 57–87 (EVEDLQVRDVELAGAPGEGGLQPLALEGALQ) are cleaved as a propeptide — c peptide.

Belongs to the insulin family. In terms of assembly, heterodimer of a B chain and an A chain linked by two disulfide bonds.

It is found in the secreted. Its function is as follows. Insulin decreases blood glucose concentration. It increases cell permeability to monosaccharides, amino acids and fatty acids. It accelerates glycolysis, the pentose phosphate cycle, and glycogen synthesis in liver. The protein is Insulin (INS) of Canis lupus familiaris (Dog).